Here is a 358-residue protein sequence, read N- to C-terminus: CX3C chemokine receptor 1 (358 aa).

Topologically, residues methionine 1–aspartate 26 are extracellular. A helical membrane pass occupies residues isoleucine 27–leucine 47. Over valine 48–aspartate 68 the chain is Cytoplasmic. The chain crosses the membrane as a helical span at residues isoleucine 69 to threonine 89. Residues histidine 90–leucine 105 are Extracellular-facing. Cysteine 103 and cysteine 176 are disulfide-bonded. A helical membrane pass occupies residues isoleucine 106–valine 126. Residues aspartate 127–glycine 147 are Cytoplasmic-facing. Residues valine 148 to phenylalanine 168 traverse the membrane as a helical segment. Residues threonine 169–glutamate 186 lie on the Extracellular side of the membrane. A helical transmembrane segment spans residues isoleucine 187–isoleucine 207. Residues methionine 208–arginine 232 lie on the Cytoplasmic side of the membrane. A helical membrane pass occupies residues leucine 233–phenylalanine 253. Over leucine 254 to alanine 275 the chain is Extracellular. Residues isoleucine 276–phenylalanine 296 traverse the membrane as a helical segment. At alanine 297–leucine 358 the chain is on the cytoplasmic side. Threonine 349 is modified (phosphothreonine).

It belongs to the G-protein coupled receptor 1 family. As to quaternary structure, found in a ternary complex with CX3CL1 and ITGAV:ITGB3 or ITGA4:ITGB1. In terms of processing, this protein is not N-glycosylated which is unusual for G-protein-coupled receptors.

It localises to the cell membrane. In terms of biological role, receptor for the C-X3-C chemokine fractalkine (CX3CL1) present on many early leukocyte cells; CX3CR1-CX3CL1 signaling exerts distinct functions in different tissue compartments, such as immune response, inflammation, cell adhesion and chemotaxis. CX3CR1-CX3CL1 signaling mediates cell migratory functions. Responsible for the recruitment of natural killer (NK) cells to inflamed tissues. Acts as a regulator of inflammation process leading to atherogenesis by mediating macrophage and monocyte recruitment to inflamed atherosclerotic plaques, promoting cell survival. Involved in airway inflammation by promoting interleukin 2-producing T helper (Th2) cell survival in inflamed lung. Involved in the migration of circulating monocytes to non-inflamed tissues, where they differentiate into macrophages and dendritic cells. Acts as a negative regulator of angiogenesis, probably by promoting macrophage chemotaxis. Plays a key role in brain microglia by regulating inflammatory response in the central nervous system (CNS) and regulating synapse maturation. Required to restrain the microglial inflammatory response in the CNS and the resulting parenchymal damage in response to pathological stimuli. Involved in brain development by participating in synaptic pruning, a natural process during which brain microglia eliminates extra synapses during postnatal development. Synaptic pruning by microglia is required to promote the maturation of circuit connectivity during brain development. Acts as an important regulator of the gut microbiota by controlling immunity to intestinal bacteria and fungi. Expressed in lamina propria dendritic cells in the small intestine, which form transepithelial dendrites capable of taking up bacteria in order to provide defense against pathogenic bacteria. Required to initiate innate and adaptive immune responses against dissemination of commensal fungi (mycobiota) component of the gut: expressed in mononuclear phagocytes (MNPs) and acts by promoting induction of antifungal IgG antibodies response to confer protection against disseminated C.albicans or C.auris infection. Also acts as a receptor for C-C motif chemokine CCL26, inducing cell chemotaxis. The chain is CX3C chemokine receptor 1 from Bos taurus (Bovine).